We begin with the raw amino-acid sequence, 201 residues long: dTTP/UTP pyrophosphatase (201 aa).

The active-site Proton acceptor is Asp-81.

The protein belongs to the Maf family. YhdE subfamily. The cofactor is a divalent metal cation.

The protein resides in the cytoplasm. The catalysed reaction is dTTP + H2O = dTMP + diphosphate + H(+). The enzyme catalyses UTP + H2O = UMP + diphosphate + H(+). Nucleoside triphosphate pyrophosphatase that hydrolyzes dTTP and UTP. May have a dual role in cell division arrest and in preventing the incorporation of modified nucleotides into cellular nucleic acids. This chain is dTTP/UTP pyrophosphatase, found in Dechloromonas aromatica (strain RCB).